We begin with the raw amino-acid sequence, 535 residues long: NEDD8-activating enzyme E1 regulatory subunit (535 aa).

Residues 332-345 (DMIADSSKFIKLQN) are interaction with UBA3.

This sequence belongs to the ubiquitin-activating E1 family. ULA1 subfamily. As to quaternary structure, heterodimer of UBA3 and NAE1. The complex binds NEDD8 and UBE2M.

It functions in the pathway protein modification; protein neddylation. Regulatory subunit of the dimeric UBA3-NAE1 E1 enzyme. E1 activates NEDD8 by first adenylating its C-terminal glycine residue with ATP, thereafter linking this residue to the side chain of the catalytic cysteine, yielding a NEDD8-UBA3 thioester and free AMP. E1 finally transfers NEDD8 to the catalytic cysteine of UBE2M. The covalent attachment of NEDD8 to target proteins is known as 'neddylation' and the process is involved in the regulation of cell growth, viability and development. This chain is NEDD8-activating enzyme E1 regulatory subunit (NAE1), found in Gallus gallus (Chicken).